Reading from the N-terminus, the 447-residue chain is Exodeoxyribonuclease 7 large subunit (447 aa).

This sequence belongs to the XseA family. As to quaternary structure, heterooligomer composed of large and small subunits.

It is found in the cytoplasm. It carries out the reaction Exonucleolytic cleavage in either 5'- to 3'- or 3'- to 5'-direction to yield nucleoside 5'-phosphates.. Bidirectionally degrades single-stranded DNA into large acid-insoluble oligonucleotides, which are then degraded further into small acid-soluble oligonucleotides. The chain is Exodeoxyribonuclease 7 large subunit from Lactiplantibacillus plantarum (strain ATCC BAA-793 / NCIMB 8826 / WCFS1) (Lactobacillus plantarum).